A 370-amino-acid polypeptide reads, in one-letter code: MLKEFEIEPLLKDKAPHQTKAVVAMSGGVDSSVAAALLHNLGYKVVGVTLQLYGTDGNANARKGACCAGQDIYDAKRVAESVGFPHYLLNYEEIFKKEVIEDFASTYMRGETPIPCVRCNQTVKFRDLLQVTKNLGADVLVTGHYVRRLEKNGEVKLCRSIDKSKDQSYFLFATTQEQLKLLRFPLGGFYKSDIRKLAKYFSLQISEKQDSQDICFVSESYSKTIAKLAPQSVQKGKIVDVNGKVLGEHSGIVNFTVGQRKGLGIAHNEPLYVIKINTENNEVIVGPINVLMQKKILIKELNWLEQPKEGMEVTVKLRSSHVGSLATIHSTDEKNKACVILNDDYFGISPGQACVAYKDEQVIGGGWICS.

Residues 24–31 (AMSGGVDS) and leucine 50 each bind ATP. The active-site Nucleophile is the cysteine 119. Cysteine 119 and cysteine 215 are disulfide-bonded. Glycine 143 contributes to the ATP binding site. The interval 165 to 167 (KDQ) is interaction with tRNA. The active-site Cysteine persulfide intermediate is cysteine 215.

Belongs to the MnmA/TRMU family.

It is found in the cytoplasm. It carries out the reaction S-sulfanyl-L-cysteinyl-[protein] + uridine(34) in tRNA + AH2 + ATP = 2-thiouridine(34) in tRNA + L-cysteinyl-[protein] + A + AMP + diphosphate + H(+). In terms of biological role, catalyzes the 2-thiolation of uridine at the wobble position (U34) of tRNA, leading to the formation of s(2)U34. This chain is tRNA-specific 2-thiouridylase MnmA, found in Wolbachia pipientis wMel.